The chain runs to 431 residues: Phosphoribosylamine--glycine ligase (431 aa).

The ATP-grasp domain occupies 108–315 (KDFLARHKIP…LVLLIEAALA (208 aa)). 134–195 (LREKGAPIVI…EEFLDGEEAS (62 aa)) serves as a coordination point for ATP. Mg(2+) is bound by residues glutamate 285 and asparagine 287.

It belongs to the GARS family. Mg(2+) serves as cofactor. The cofactor is Mn(2+).

It catalyses the reaction 5-phospho-beta-D-ribosylamine + glycine + ATP = N(1)-(5-phospho-beta-D-ribosyl)glycinamide + ADP + phosphate + H(+). The protein operates within purine metabolism; IMP biosynthesis via de novo pathway; N(1)-(5-phospho-D-ribosyl)glycinamide from 5-phospho-alpha-D-ribose 1-diphosphate: step 2/2. This chain is Phosphoribosylamine--glycine ligase, found in Pseudomonas syringae pv. tomato (strain ATCC BAA-871 / DC3000).